Here is a 312-residue protein sequence, read N- to C-terminus: Formate dehydrogenase iron-sulfur subunit (312 aa).

4 consecutive 4Fe-4S ferredoxin-type domains span residues 35 to 65, 97 to 129, 130 to 159, and 164 to 195; these read IAKL…SDIN, LEWL…QYAN, GIVD…MNPE, and YKCT…FGSK. Positions 44, 47, 50, 54, 106, 109, 114, 118, 139, 142, 145, 149, 166, 169, 181, and 185 each coordinate [4Fe-4S] cluster.

Formate dehydrogenase is a membrane-bound complex, formed by subunits alpha, beta and gamma. [4Fe-4S] cluster serves as cofactor.

It localises to the cell membrane. In terms of biological role, allows to use formate as major electron donor during aerobic respiration. The beta chain is an electron transfer unit containing 4 cysteine clusters involved in the formation of iron-sulfur centers. Electrons are transferred from the gamma chain to the molybdenum cofactor of the alpha subunit. The chain is Formate dehydrogenase iron-sulfur subunit (fdxH) from Haemophilus influenzae (strain ATCC 51907 / DSM 11121 / KW20 / Rd).